Reading from the N-terminus, the 192-residue chain is Epididymal-specific lipocalin-12 (192 aa).

A signal peptide spans 1 to 19 (MRLLCGLWLWLSLLKVLQA). C88 and C192 are oxidised to a cystine.

It belongs to the calycin superfamily. Lipocalin family. Monomer.

It is found in the secreted. In terms of biological role, binds all-trans retinoic acid and may act as a retinoid carrier protein within the epididymis. May play a role in male fertility. The sequence is that of Epididymal-specific lipocalin-12 (LCN12) from Homo sapiens (Human).